Reading from the N-terminus, the 184-residue chain is MDHYLEIRVLPDPEFSSEMLMAALFAKLHRVLGARGQGDIGVSFPDVNVMPGARLRLHGSAQALQALEASTWRKGLTDYCQCSPVTPVPEIKGWRVVSRVQVKSNPQRLLRRSVKKGWLTEEQAIERLATQAEQRTDLPFLNMKSLSSQQLFKLFIRHGDLLKEPVKGEFSSYGLSATATIPWF.

The protein belongs to the CRISPR-associated endoribonuclease Cas6 family. Cas6f/Csy4, subtype I-F/Ypest subfamily.

CRISPR (clustered regularly interspaced short palindromic repeat) is an adaptive immune system that provides protection against mobile genetic elements (viruses, transposable elements and conjugative plasmids). CRISPR clusters contain sequences complementary to antecedent mobile elements and target invading nucleic acids. CRISPR clusters are transcribed and processed into CRISPR RNA (crRNA). Processes pre-crRNA into individual crRNA units. Its function is as follows. Complements a csy4 disruption in Pseudomonas aeruginosa PA14, restoring inhibition of biofilm formation and generation of crRNA. The sequence is that of CRISPR-associated endonuclease Cas6/Csy4 (cas6f) from Escherichia coli (strain UTI89 / UPEC).